A 72-amino-acid polypeptide reads, in one-letter code: Translation initiation factor IF-1 (72 aa).

The S1-like domain occupies 1–72 (MAKEDTLEFP…SKGRINYRFK (72 aa)).

It belongs to the IF-1 family. Component of the 30S ribosomal translation pre-initiation complex which assembles on the 30S ribosome in the order IF-2 and IF-3, IF-1 and N-formylmethionyl-tRNA(fMet); mRNA recruitment can occur at any time during PIC assembly.

Its subcellular location is the cytoplasm. Its function is as follows. One of the essential components for the initiation of protein synthesis. Stabilizes the binding of IF-2 and IF-3 on the 30S subunit to which N-formylmethionyl-tRNA(fMet) subsequently binds. Helps modulate mRNA selection, yielding the 30S pre-initiation complex (PIC). Upon addition of the 50S ribosomal subunit IF-1, IF-2 and IF-3 are released leaving the mature 70S translation initiation complex. This is Translation initiation factor IF-1 from Cereibacter sphaeroides (strain ATCC 17029 / ATH 2.4.9) (Rhodobacter sphaeroides).